The following is an 884-amino-acid chain: MDSPCWLLLLLLGAFAIIGCVQAQDQQEFISLDCGLPMTEPSSYTESVTGLRFSSDAEFIQTGESGKIQASMENDYLKPYTRLRYFPEERRNCYSLSVDKNRKYLIRARFIYGNYDGRNSNPIFELHLGPNLWATIDLQKFVNGTMEEILHTPTSNSLNVCLVKTGTTTPLISALELRPLGNNSYLTDGSLNLFVRIYLNKTDGFLRYPDDIYDRRWHNYFMVDDWTQIFTTLEVTNDNNYEPPKKALAAAATPSNASAPLTISWPPDNPGDQYYLYSHFSEIQDLQTNDTREFDILWDGAVVEEGFIPPKLGVTTIHNLSPVTCKGENCIYQLIKTSRSTLPSLLNALEIYTVIQFPRSETNENDVVAVKNIEAAYKLSRIRWQGDPCVPQKYAWDGLNCSNNTDVSKPPRVLSLNLSSSGLTGIIAAAIQNLTHLEKLDLSNNTLTGVVPEFLAQMKSLVIINLSGNNLSGPLPQGLRREGLELLVQGNPRLCLSGSCTEKNSKKKFPVVIVASVASVAIIVAVLVIIFVLSKKKSSTVGALQPPLSMPMVHDNSPEPSIETKKRRFTYSEVIKMTNNFQRVVGEGGFGVVCHGTINGSEQVAVKVLSQSSSQGYKHFKAEVDLLLRVHHTNLVSLVGYCDERDHLALIYEFLPKGDLRQHLSGKSGGSFINWGNRLRIALEAALGLEYLHSGCTPPIVHRDIKTTNILLDEQLKAKLADFGLSRSFPIGGETHISTVVAGTPGYLDPEYYQTTRLGEKSDVYSFGIVLLEIITNQPVIDQSRSKSHISQWVGFELTRGDITKIMDPNLNGDYESRSVWRVLELAMSCANPSSVNRPNMSQVANELKECLVSENLRENMNMDSQNSLKVSMSFDTELFPRAR.

An N-terminal signal peptide occupies residues 1-23 (MDSPCWLLLLLLGAFAIIGCVQA). Residues 24-510 (QDQQEFISLD…TEKNSKKKFP (487 aa)) lie on the Extracellular side of the membrane. N-linked (GlcNAc...) asparagine glycans are attached at residues asparagine 143, asparagine 182, asparagine 200, asparagine 256, asparagine 289, asparagine 400, asparagine 403, asparagine 417, asparagine 433, asparagine 444, asparagine 465, and asparagine 470. 3 LRR repeats span residues 412-433 (RVLS…AIQN), 436-457 (HLEK…FLAQ), and 460-480 (SLVI…QGLR). Residues 511-531 (VVIVASVASVAIIVAVLVIIF) traverse the membrane as a helical segment. Over 532-884 (VLSKKKSSTV…FDTELFPRAR (353 aa)) the chain is Cytoplasmic. Residue threonine 570 is modified to Phosphothreonine. The region spanning 579 to 852 (NNFQRVVGEG…QVANELKECL (274 aa)) is the Protein kinase domain. Residues 585 to 593 (VGEGGFGVV) and lysine 607 contribute to the ATP site. Position 652 is a phosphotyrosine (tyrosine 652). The Proton acceptor role is filled by aspartate 704. At serine 738 the chain carries Phosphoserine. 2 positions are modified to phosphothreonine: threonine 739 and threonine 744. A Phosphotyrosine modification is found at tyrosine 752.

This sequence belongs to the protein kinase superfamily. Ser/Thr protein kinase family. Binds to the ammonium transporter AMT1-1.

The protein localises to the membrane. The catalysed reaction is L-seryl-[protein] + ATP = O-phospho-L-seryl-[protein] + ADP + H(+). It carries out the reaction L-threonyl-[protein] + ATP = O-phospho-L-threonyl-[protein] + ADP + H(+). Its function is as follows. Required for accurate photosynthesis. The sequence is that of Probable LRR receptor-like serine/threonine-protein kinase PAM74 (PAM74) from Arabidopsis thaliana (Mouse-ear cress).